The primary structure comprises 375 residues: Trans-enoyl reductase cghC (375 aa).

48–51 provides a ligand contact to NADP(+); that stretch reads VDTK. 135–142 serves as a coordination point for substrate; it reads NAWYTSGW. NADP(+)-binding positions include 188-191, 211-214, and 276-277; these read SSST, SARN, and LD. 297–301 serves as a coordination point for substrate; that stretch reads GPELV. 366-367 is a binding site for NADP(+); the sequence is VS.

The protein belongs to the zinc-containing alcohol dehydrogenase family. As to quaternary structure, monomer.

The catalysed reaction is (2S,4S)-4-hydroxy-4-methylglutamate + 8 malonyl-CoA + 3 S-adenosyl-L-methionine + ATP + 8 NADPH + 11 H(+) = (2S)-3-[(2S)-3,5-dioxo-4-[(2E,4R,6R,8E,10E,12E)-4,6,12-trimethyltetradeca-2,8,10,12-tetraenoyl]pyrrolidin-2-yl]-2-hydroxy-2-methylpropanoate + AMP + 3 S-adenosyl-L-homocysteine + 8 CO2 + diphosphate + 8 NADP(+) + 8 CoA + 6 H2O. It participates in secondary metabolite biosynthesis. In terms of biological role, trans-enoyl reductase; part of the gene cluster that mediates the biosynthesis of the tetramic acid Sch210972, a potential anti-HIV fungal natural product that contains a decalin core. The PKS module of cghG together with the enoylreductase cghC catalyze the formation of the polyketide unit which is then conjugated to 4-hydroxyl-4-methyl glutamate (HMG) by the condensation domain of the cghG NRPS module. One unique structural feature of Sch210972 is the tetramic acid motif proposed to be derived from the non-proteinogenic amino acid HMG, by a Dieckmann-type condensation catalyzed by the reductase domain of cghG. The aldolase cghB catalyzes the aldol condensation of 2 molecules of pyruvic acid to yield the intermediate 4-hydroxyl-4-methyl-2-oxoglutarate (HMOG), which can then be stereoselectively transaminated by an unidentified enzyme to form HMG. The Diels-Alderase cghA then uses the Dieckmann product released by cghG as substrate and catalyzes the Diels-Alder cycloaddition to form the decalin ring of Sch210972. CghA also suppresses the nonenzymatic formation of the alternative stereoisomer. In Chaetomium globosum (strain ATCC 6205 / CBS 148.51 / DSM 1962 / NBRC 6347 / NRRL 1970) (Soil fungus), this protein is Trans-enoyl reductase cghC.